The sequence spans 503 residues: ATP synthase subunit alpha (503 aa).

169–176 serves as a coordination point for ATP; that stretch reads GDRKTGKT.

Belongs to the ATPase alpha/beta chains family. In terms of assembly, F-type ATPases have 2 components, CF(1) - the catalytic core - and CF(0) - the membrane proton channel. CF(1) has five subunits: alpha(3), beta(3), gamma(1), delta(1), epsilon(1). CF(0) has three main subunits: a(1), b(2) and c(9-12). The alpha and beta chains form an alternating ring which encloses part of the gamma chain. CF(1) is attached to CF(0) by a central stalk formed by the gamma and epsilon chains, while a peripheral stalk is formed by the delta and b chains.

The protein localises to the cell membrane. The enzyme catalyses ATP + H2O + 4 H(+)(in) = ADP + phosphate + 5 H(+)(out). Functionally, produces ATP from ADP in the presence of a proton gradient across the membrane. The alpha chain is a regulatory subunit. The protein is ATP synthase subunit alpha of Lactobacillus helveticus (strain DPC 4571).